Here is a 93-residue protein sequence, read N- to C-terminus: uncharacterized protein (93 aa).

The stretch at 36 to 69 (SEERLLSRLFEEMDELREAVEKEDWENLRDELLD) forms a coiled coil.

This is an uncharacterized protein from Archaeoglobus fulgidus (strain ATCC 49558 / DSM 4304 / JCM 9628 / NBRC 100126 / VC-16).